A 307-amino-acid chain; its full sequence is Urease accessory protein UreD (307 aa).

The protein belongs to the UreD family. In terms of assembly, ureD, UreF and UreG form a complex that acts as a GTP-hydrolysis-dependent molecular chaperone, activating the urease apoprotein by helping to assemble the nickel containing metallocenter of UreC. The UreE protein probably delivers the nickel.

It is found in the cytoplasm. In terms of biological role, required for maturation of urease via the functional incorporation of the urease nickel metallocenter. The chain is Urease accessory protein UreD from Prochlorococcus marinus (strain NATL1A).